Here is a 446-residue protein sequence, read N- to C-terminus: Phosphoglucosamine mutase (446 aa).

The Phosphoserine intermediate role is filled by Ser101. Mg(2+) contacts are provided by Ser101, Asp240, Asp242, and Asp244. Ser101 is modified (phosphoserine).

This sequence belongs to the phosphohexose mutase family. Mg(2+) is required as a cofactor. In terms of processing, activated by phosphorylation.

It carries out the reaction alpha-D-glucosamine 1-phosphate = D-glucosamine 6-phosphate. Catalyzes the conversion of glucosamine-6-phosphate to glucosamine-1-phosphate. This chain is Phosphoglucosamine mutase, found in Coxiella burnetii (strain RSA 331 / Henzerling II).